The sequence spans 142 residues: Hemoglobin subunit alpha (142 aa).

A Globin domain is found at 1–142 (GLTAADKTLI…VEKALFETYR (142 aa)). Residue H59 participates in O2 binding. H88 serves as a coordination point for heme b.

It belongs to the globin family. In terms of assembly, heterotetramer of two alpha chains and two beta chains (an easy dimerization is also reported). In terms of tissue distribution, red blood cells.

In terms of biological role, involved in oxygen transport from the lung to the various peripheral tissues. This is Hemoglobin subunit alpha (HBA) from Latimeria chalumnae (Coelacanth).